Consider the following 136-residue polypeptide: Salivary protein 15 Iric-2 (136 aa).

A signal peptide spans 1 to 22; the sequence is MESFVAMKVVCIVLLFVIAAEA. Asn105 carries N-linked (GlcNAc...) asparagine glycosylation. A CD4-binding region spans residues 117-136; sequence GPKNQTCENKDQCVPHIPGC.

The protein belongs to the salp15 family. In terms of assembly, interacts with host CD4. Interacts with host DC-SIGN (CD209). Interacts with Borrelia outer surface protein C (OspC). As to expression, expressed in salivary glands. Detected in fed adult female.

The protein localises to the secreted. Functionally, salivary tick protein that downregulates host immune system by binding to both dendritic cells, and CD4(+) T cells. Specifically binds to the CD4 coreceptor on T cells. This interaction prevents the activation of the Src kinase, Lck, and its downstream substrate Zap-70, and results in deficient activation of PLCgamma1, the repression of calcium fluxes triggered by T-cell antigen receptor (TCR) ligation, and a subsequent reduction in interleukin-2 production. This salivary protein also binds to DC-SIGN (CD209) on dendritic cells (DC) and activates the Raf-1 kinase/MEK signaling pathway that results in down-regulating expression of pro-inflammatory cytokines. Furthermore, it inhibits T cell proliferation induced by DCs. In addition, it inhibits in vitro keratinocyte inflammation induced by Borrelia burgdorferi or by the major outer surface protein (OspC) of Borrelia. In addition, it downregulates chemokines and monocyte chemoattractant protein 1, as well as several antimicrobial peptides such as defensins, cathelicidin, psoriasin, and RNase 7. Apart from its immunomodulatory activities, it is also associated with protection of Borrelia spirochetes from antibody-mediated killing through its binding to OspC. In vivo, tests on different immune disease animal models show promising therapeutic results, e.g., in inhibiting HIV infection, experimental autoimmune encephalomyelitis, transplantation rejection, and asthma. The polypeptide is Salivary protein 15 Iric-2 (Ixodes ricinus (Common tick)).